We begin with the raw amino-acid sequence, 463 residues long: Cytoplasmic 60S subunit biogenesis factor SPCC550.15c (463 aa).

2 consecutive C2H2-type zinc fingers follow at residues 5-30 (FACT…DWHH) and 70-94 (QNCE…SKKH). Positions 109-136 (KLQSEDASSIASSTLSMGEPVVDSEIEE) are disordered. Residues 113–124 (EDASSIASSTLS) show a composition bias toward polar residues. S150 and S155 each carry phosphoserine. The tract at residues 155–189 (SLHGRESEPSKTELATSIPQSNEASKSHLFTQEPT) is disordered. A compositionally biased stretch (polar residues) spans 167 to 188 (ELATSIPQSNEASKSHLFTQEP). 2 consecutive C2H2-type zinc fingers follow at residues 208–231 (RDCL…KASH) and 259–283 (FTCL…QKGH). Over residues 317-338 (TVVEEDGSSGEGDWEDVSDDSD) the composition is skewed to acidic residues. 2 disordered regions span residues 317 to 341 (TVVE…DNSS) and 444 to 463 (ANKM…ALLQ).

Belongs to the REI1 family. In terms of assembly, associates with nascent pre-60S particles that have not yet entered the translating pool, and is released from mature 60S subunits.

The protein localises to the cytoplasm. Functionally, pre-60S-associated factor involved in the cytoplasmic maturation of the 60S subunit. Involved in the dissociation and recycling of other late pre-60S factors before newly synthesized large ribosomal subunits enter translation. The chain is Cytoplasmic 60S subunit biogenesis factor SPCC550.15c from Schizosaccharomyces pombe (strain 972 / ATCC 24843) (Fission yeast).